The primary structure comprises 393 residues: NAD(P)H-quinone oxidoreductase subunit H, chloroplastic (393 aa).

This sequence belongs to the complex I 49 kDa subunit family. NDH is composed of at least 16 different subunits, 5 of which are encoded in the nucleus.

The protein localises to the plastid. Its subcellular location is the chloroplast thylakoid membrane. It catalyses the reaction a plastoquinone + NADH + (n+1) H(+)(in) = a plastoquinol + NAD(+) + n H(+)(out). The enzyme catalyses a plastoquinone + NADPH + (n+1) H(+)(in) = a plastoquinol + NADP(+) + n H(+)(out). Functionally, NDH shuttles electrons from NAD(P)H:plastoquinone, via FMN and iron-sulfur (Fe-S) centers, to quinones in the photosynthetic chain and possibly in a chloroplast respiratory chain. The immediate electron acceptor for the enzyme in this species is believed to be plastoquinone. Couples the redox reaction to proton translocation, and thus conserves the redox energy in a proton gradient. This Olimarabidopsis pumila (Dwarf rocket) protein is NAD(P)H-quinone oxidoreductase subunit H, chloroplastic.